A 126-amino-acid polypeptide reads, in one-letter code: Small ribosomal subunit protein uS12 (126 aa).

A disordered region spans residues 1–26 (MPTINQLVRKGRASETTKSKSPALQD). D89 bears the 3-methylthioaspartic acid mark. The segment at 101 to 126 (SLDTQGVKDRKQARSKYGAKRAKAAK) is disordered. A compositionally biased stretch (basic residues) spans 113–126 (ARSKYGAKRAKAAK).

The protein belongs to the universal ribosomal protein uS12 family. As to quaternary structure, part of the 30S ribosomal subunit. Contacts proteins S8 and S17. May interact with IF1 in the 30S initiation complex.

Functionally, with S4 and S5 plays an important role in translational accuracy. Its function is as follows. Interacts with and stabilizes bases of the 16S rRNA that are involved in tRNA selection in the A site and with the mRNA backbone. Located at the interface of the 30S and 50S subunits, it traverses the body of the 30S subunit contacting proteins on the other side and probably holding the rRNA structure together. The combined cluster of proteins S8, S12 and S17 appears to hold together the shoulder and platform of the 30S subunit. The sequence is that of Small ribosomal subunit protein uS12 from Burkholderia pseudomallei (strain 1106a).